Reading from the N-terminus, the 92-residue chain is Small ribosomal subunit protein bS18 (92 aa).

It belongs to the bacterial ribosomal protein bS18 family. As to quaternary structure, part of the 30S ribosomal subunit. Forms a tight heterodimer with protein bS6.

Its function is as follows. Binds as a heterodimer with protein bS6 to the central domain of the 16S rRNA, where it helps stabilize the platform of the 30S subunit. The protein is Small ribosomal subunit protein bS18 of Cupriavidus necator (strain ATCC 17699 / DSM 428 / KCTC 22496 / NCIMB 10442 / H16 / Stanier 337) (Ralstonia eutropha).